The following is a 345-amino-acid chain: MALYPFTAIVGQTEMIRAMLIATVEPTLGGVLAFGDRGTGKSTAVRALAALLPTMRAVAGCRYHCDPAARSALCPECRNRRAAGRLASERVRIPVVDLPLGATEDRVVGALDLERALADGVKAFEPGLLARAHRGFLYIDEINLLEDHLVDLLLDVAASGENVVEREGLSLRHPARFVLIGSGNPEEGELRPQLLDRFGLCVEVKTPTDLDQRIEVVRRRDAFEHDQAGFTRRFAADEAALRRQLVTAMKLLPLVSVPEAILRLAAKLCIELGTDGLRGELTLLRAARAEAALEGDTVVTESHLRAVAPAALRHRLRRDPLDESLAGARVERAMAALFSQAAIAR.

An ATP-binding site is contributed by 35-42; that stretch reads GDRGTGKS.

The protein belongs to the Mg-chelatase subunits D/I family.

It catalyses the reaction protoporphyrin IX + Mg(2+) + ATP + H2O = Mg-protoporphyrin IX + ADP + phosphate + 3 H(+). It participates in porphyrin-containing compound metabolism; bacteriochlorophyll biosynthesis. Its function is as follows. Involved in bacteriochlorophyll biosynthesis; introduces a magnesium ion into protoporphyrin IX to yield Mg-protoporphyrin IX. In Acidiphilium rubrum, this protein is Magnesium-chelatase 38 kDa subunit (bchI).